The chain runs to 323 residues: uncharacterized protein (323 aa).

This is an uncharacterized protein from Bacillus subtilis (strain 168).